We begin with the raw amino-acid sequence, 867 residues long: V-set and immunoglobulin domain-containing protein 10-like (867 aa).

An N-terminal signal peptide occupies residues 1–27 (MDNPQALPLFLLLASLVGILTLRASSG). The Extracellular segment spans residues 28–776 (LQQTNFSSAF…RAGPTLSHGA (749 aa)). Asn32 carries N-linked (GlcNAc...) asparagine glycosylation. Positions 35–45 (SAFSSDSKSSS) are enriched in low complexity. The tract at residues 35-60 (SAFSSDSKSSSQGLGVEVPSIKPPSW) is disordered. N-linked (GlcNAc...) asparagine glycosylation is found at Asn88, Asn96, and Asn144. The segment at 104-186 (LSPVSPFSET…PESKFSAETH (83 aa)) is disordered. A compositionally biased stretch (polar residues) spans 137 to 153 (TVKTPASNISTQVSHTK). The segment covering 159–170 (PDSKFSPDDMDL) has biased composition (basic and acidic residues). Residues 173 to 186 (SAQSPESKFSAETH) are compositionally biased toward polar residues. Ig-like C2-type domains lie at 302 to 394 (PQLS…ADVS) and 402 to 487 (PTIT…SLLN). Cysteines 324 and 378 form a disulfide. An N-linked (GlcNAc...) asparagine glycan is attached at Asn423. The cysteines at positions 428 and 471 are disulfide-linked. Residue Asn487 is glycosylated (N-linked (GlcNAc...) asparagine). Residues 602–627 (ASGCPPPSRASWAREGRPLAPGGGSR) are disordered. N-linked (GlcNAc...) asparagine glycans are attached at residues Asn641 and Asn650. The helical transmembrane segment at 777–797 (IAGIVLGSLLGLALLAVLLLL) threads the bilayer. Residues 798 to 867 (CICCLCRFRG…QAQTPVQLSL (70 aa)) lie on the Cytoplasmic side of the membrane.

In terms of tissue distribution, expressed in the esophagus, particularly in the suprabasilar layers of the epithelium. Expression is largely reduced in esophageal metaplasia, dysplasia, and adenocarcinoma lesions.

It is found in the membrane. The chain is V-set and immunoglobulin domain-containing protein 10-like (VSIG10L) from Homo sapiens (Human).